The primary structure comprises 178 residues: Large ribosomal subunit protein uL5 (178 aa).

An N-acetylalanine modification is found at Ala2. A Glycyl lysine isopeptide (Lys-Gly) (interchain with G-Cter in SUMO2) cross-link involves residue Lys38. 2 positions are modified to phosphothreonine: Thr44 and Thr47. Lys52 carries the N6-acetyllysine; alternate modification. A Glycyl lysine isopeptide (Lys-Gly) (interchain with G-Cter in SUMO2); alternate cross-link involves residue Lys52. Position 85 is an N6-acetyllysine (Lys85). A Glycyl lysine isopeptide (Lys-Gly) (interchain with G-Cter in SUMO2) cross-link involves residue Lys154.

This sequence belongs to the universal ribosomal protein uL5 family. Component of the large ribosomal subunit (LSU). Part of the 5S RNP complex, which is a LSU subcomplex composed of the 5S RNA, RPL5 and RPL11. Component of a hexameric 5S RNP precursor complex, composed of 5S RNA, RRS1, RPF2/BXDC1, RPL5, RPL11 and HEATR3; this complex acts as a precursor for ribosome assembly. Interacts with PML. Interacts with MDM2 (via its RanBP2-type zinc finger domain); negatively regulates MDM2-mediated TP53 ubiquitination and degradation. Interacts with NOP53; retains RPL11 into the nucleolus.

It localises to the nucleus. Its subcellular location is the nucleolus. The protein resides in the cytoplasm. Its function is as follows. Component of the ribosome, a large ribonucleoprotein complex responsible for the synthesis of proteins in the cell. The small ribosomal subunit (SSU) binds messenger RNAs (mRNAs) and translates the encoded message by selecting cognate aminoacyl-transfer RNA (tRNA) molecules. The large subunit (LSU) contains the ribosomal catalytic site termed the peptidyl transferase center (PTC), which catalyzes the formation of peptide bonds, thereby polymerizing the amino acids delivered by tRNAs into a polypeptide chain. The nascent polypeptides leave the ribosome through a tunnel in the LSU and interact with protein factors that function in enzymatic processing, targeting, and the membrane insertion of nascent chains at the exit of the ribosomal tunnel. As part of the 5S RNP/5S ribonucleoprotein particle it is an essential component of the LSU, required for its formation and the maturation of rRNAs. It also couples ribosome biogenesis to p53/TP53 activation. As part of the 5S RNP it accumulates in the nucleoplasm and inhibits MDM2, when ribosome biogenesis is perturbed, mediating the stabilization and the activation of TP53. Promotes nucleolar location of PML. This chain is Large ribosomal subunit protein uL5 (RPL11), found in Pongo abelii (Sumatran orangutan).